Reading from the N-terminus, the 274-residue chain is uncharacterized protein (274 aa).

Basic and acidic residues predominate over residues 1–15 (MEESKTKRKEDRIDL). The tract at residues 1 to 40 (MEESKTKRKEDRIDLKNTPPQKKSKRDSTNDETARTSLRS) is disordered. The G-patch domain maps to 41-87 (IMPRGYKMMENMGYKEGETLGSNESALKEPIKVEINTKRRGIRAEKP).

It localises to the cytoplasm. The protein localises to the nucleus. This is an uncharacterized protein from Saccharomyces cerevisiae (strain ATCC 204508 / S288c) (Baker's yeast).